The primary structure comprises 594 residues: UvrABC system protein C (594 aa).

Residues 17–94 (LEPGCYLMKD…IKQYQPRYNI (78 aa)) enclose the GIY-YIG domain. A UVR domain is found at 199-234 (KTILHHLEDRMNKASEQLDFEQAKEYRDMIQHIHNL).

The protein belongs to the UvrC family. As to quaternary structure, interacts with UvrB in an incision complex.

The protein resides in the cytoplasm. The UvrABC repair system catalyzes the recognition and processing of DNA lesions. UvrC both incises the 5' and 3' sides of the lesion. The N-terminal half is responsible for the 3' incision and the C-terminal half is responsible for the 5' incision. In Staphylococcus epidermidis (strain ATCC 12228 / FDA PCI 1200), this protein is UvrABC system protein C.